Consider the following 118-residue polypeptide: UPF0102 protein Sde_3146 (118 aa).

Belongs to the UPF0102 family.

This is UPF0102 protein Sde_3146 from Saccharophagus degradans (strain 2-40 / ATCC 43961 / DSM 17024).